The following is a 799-amino-acid chain: Phenylalanine--tRNA ligase beta subunit (799 aa).

Residues 39-150 (GKGFSGVIVG…EHLQAGTALN (112 aa)) enclose the tRNA-binding domain. Residues 402–478 (FLELTIRCRL…RIYGYDHIPR (77 aa)) form the B5 domain. 4 residues coordinate Mg(2+): aspartate 456, aspartate 462, glutamate 465, and glutamate 466. One can recognise an FDX-ACB domain in the interval 705-798 (AIYPGSERDW…VSQKFANDLK (94 aa)).

This sequence belongs to the phenylalanyl-tRNA synthetase beta subunit family. Type 1 subfamily. As to quaternary structure, tetramer of two alpha and two beta subunits. Requires Mg(2+) as cofactor.

It is found in the cytoplasm. It catalyses the reaction tRNA(Phe) + L-phenylalanine + ATP = L-phenylalanyl-tRNA(Phe) + AMP + diphosphate + H(+). The polypeptide is Phenylalanine--tRNA ligase beta subunit (Protochlamydia amoebophila (strain UWE25)).